We begin with the raw amino-acid sequence, 443 residues long: MRIVAILLLFCLCRAAEPRKSSPGVLRSQGNPSRSHGRGGRRGSSPVKRYAPGLPCDVYTYLHEKYLDCQERKLVYVLPDWPQDLLHMLLARNKIRVLKNNMFAKFKRLKSLDLQQNEISKIESEAFFGLNKLTTLLLQHNQIKVLTEEAFIYTPLLSYLRLYDNPWHCTCELETLISMLQIPRNRNLGNYAKCGSPPALRNKKLLQLKPQELCDEEEKEQLDPKPQVSGIPAVIRPEADSTLCHNYVFPIQTLDCKRKELKKVPSNIPPDIVKLDLSSNKIRQLRPKEFEDVHELKKLNLSSNGIEFIDPAAFLGLIHLEELDLSNNSLQNFDYGVLEDLYFLKLLWLRDNPWRCDYSIHYLYYWLKHHYNVHYNGLECKTPEEYKGWSVGKYVRSYYEECPKDKLPAYPETFDQDTEDDEWQKIHRDHPAKKHRVRITIVG.

Residues 1–15 form the signal peptide; that stretch reads MRIVAILLLFCLCRA. The disordered stretch occupies residues 20-48; the sequence is KSSPGVLRSQGNPSRSHGRGGRRGSSPVK. LRR repeat units follow at residues 84 to 105, 108 to 129, and 132 to 153; these read DLLHMLLARNKIRVLKNNMFAK, RLKSLDLQQNEISKIESEAFFG, and KLTTLLLQHNQIKVLTEEAFIY. An LRRCT 1 domain is found at 165 to 216; the sequence is NPWHCTCELETLISMLQIPRNRNLGNYAKCGSPPALRNKKLLQLKPQELCDE. Residues 229–270 enclose the LRRNT domain; that stretch reads SGIPAVIRPEADSTLCHNYVFPIQTLDCKRKELKKVPSNIPP. LRR repeat units lie at residues 271 to 292, 295 to 316, and 319 to 342; these read DIVKLDLSSNKIRQLRPKEFED, ELKKLNLSSNGIEFIDPAAFLG, and HLEELDLSNNSLQNFDYGVLEDLY. Residues 352–404 form the LRRCT 2 domain; that stretch reads NPWRCDYSIHYLYYWLKHHYNVHYNGLECKTPEEYKGWSVGKYVRSYYEECPK.

Expressed in osteoblasts, spleen, lung and heart.

The protein resides in the secreted. It is found in the extracellular space. In terms of biological role, involved in bone homeostasis. Acts as a negative regulator of RANKL-induced osteoclast precursor differentiation from bone marrow precursors. The polypeptide is Leucine-rich repeat-containing protein 17 (Lrrc17) (Mus musculus (Mouse)).